The primary structure comprises 166 residues: Probable chemoreceptor glutamine deamidase CheD 1 (166 aa).

It belongs to the CheD family.

It carries out the reaction L-glutaminyl-[protein] + H2O = L-glutamyl-[protein] + NH4(+). Functionally, probably deamidates glutamine residues to glutamate on methyl-accepting chemotaxis receptors (MCPs), playing an important role in chemotaxis. This is Probable chemoreceptor glutamine deamidase CheD 1 from Leptospira interrogans serogroup Icterohaemorrhagiae serovar copenhageni (strain Fiocruz L1-130).